We begin with the raw amino-acid sequence, 675 residues long: Acetyl-coenzyme A synthetase 2 (675 aa).

CoA is bound by residues 206 to 209 (RGGK) and Thr-325. Residues 401-403 (GEP), 425-430 (DTMWQT), Asp-516, and Arg-531 each bind ATP. Ser-539 is a CoA binding site. Arg-542 contacts ATP. Arg-604 provides a ligand contact to CoA.

Belongs to the ATP-dependent AMP-binding enzyme family.

It catalyses the reaction acetate + ATP + CoA = acetyl-CoA + AMP + diphosphate. The chain is Acetyl-coenzyme A synthetase 2 (ACS2) from Zygosaccharomyces bailii.